The primary structure comprises 622 residues: Protein FAM234B (622 aa).

The disordered stretch occupies residues 1–68 (MATVLSRALK…EPDSDAEVAE (68 aa)). Ser-16 carries the phosphoserine modification. At Thr-26 the chain carries Phosphothreonine. Phosphoserine occurs at positions 30, 33, and 62. The helical transmembrane segment at 104 to 124 (TSVFLLTLGISMILVLLCAFL) threads the bilayer.

It belongs to the FAM234 family.

It is found in the membrane. Its subcellular location is the golgi outpost. It localises to the cytoplasm. The protein resides in the cytoskeleton. The protein localises to the microtubule organizing center. The protein is Protein FAM234B of Homo sapiens (Human).